Reading from the N-terminus, the 192-residue chain is Transposon Tn552 DNA-invertase BinR (192 aa).

Residues 1-136 (MKIGYARVST…AGRIAARARG (136 aa)) enclose the Resolvase/invertase-type recombinase catalytic domain. The active-site O-(5'-phospho-DNA)-serine intermediate is the serine 9. A DNA-binding region (H-T-H motif) is located at residues 163-182 (IKTIAEQWKVSRTTIYRYLN).

Belongs to the site-specific recombinase resolvase family.

DNA-invertase, mediating the inversion of inv. The chain is Transposon Tn552 DNA-invertase BinR (resR) from Staphylococcus aureus.